We begin with the raw amino-acid sequence, 288 residues long: Probable coatomer subunit epsilon (288 aa).

Ser-262 is subject to Phosphoserine.

Belongs to the COPE family. As to quaternary structure, oligomeric complex that consists of at least the alpha, beta, beta', gamma, delta, epsilon and zeta subunits.

It localises to the cytoplasm. It is found in the golgi apparatus membrane. The protein localises to the cytoplasmic vesicle. Its subcellular location is the COPI-coated vesicle membrane. Its function is as follows. The coatomer is a cytosolic protein complex that binds to dilysine motifs and reversibly associates with Golgi non-clathrin-coated vesicles, which further mediate biosynthetic protein transport from the ER, via the Golgi up to the trans Golgi network. The coatomer complex is required for budding from Golgi membranes, and is essential for the retrograde Golgi-to-ER transport of dilysine-tagged proteins. This chain is Probable coatomer subunit epsilon (sec28), found in Schizosaccharomyces pombe (strain 972 / ATCC 24843) (Fission yeast).